Here is a 793-residue protein sequence, read N- to C-terminus: Putative dipeptidyl aminopeptidase C2E11.08 (793 aa).

Topologically, residues 1-24 (MNDFSFEDKGLISRSGFGSRHVRR) are cytoplasmic. A helical; Signal-anchor for type II membrane protein membrane pass occupies residues 25-45 (VVKALALIFSLLILYLTISNV). The Lumenal segment spans residues 46–793 (SDSPPKRDSL…STGVRQHRWD (748 aa)). Residues Asn101, Asn136, Asn246, Asn299, Asn303, Asn324, Asn336, Asn377, Asn384, Asn407, and Asn535 are each glycosylated (N-linked (GlcNAc...) asparagine). Active-site charge relay system residues include Ser647, Asp722, and His755. The N-linked (GlcNAc...) asparagine glycan is linked to Asn761.

This sequence belongs to the peptidase S9B family.

The protein localises to the vacuole membrane. This Schizosaccharomyces pombe (strain 972 / ATCC 24843) (Fission yeast) protein is Putative dipeptidyl aminopeptidase C2E11.08.